The primary structure comprises 675 residues: DNA gyrase subunit B (675 aa).

The Toprim domain occupies 453–567 (SELYVVEGDS…NGHVFLAQPP (115 aa)). 3 residues coordinate Mg(2+): E459, D532, and D534.

This sequence belongs to the type II topoisomerase GyrB family. As to quaternary structure, heterotetramer, composed of two GyrA and two GyrB chains. In the heterotetramer, GyrA contains the active site tyrosine that forms a transient covalent intermediate with DNA, while GyrB binds cofactors and catalyzes ATP hydrolysis. The cofactor is Mg(2+). Mn(2+) is required as a cofactor. Requires Ca(2+) as cofactor.

It is found in the cytoplasm. The catalysed reaction is ATP-dependent breakage, passage and rejoining of double-stranded DNA.. Its function is as follows. A type II topoisomerase that negatively supercoils closed circular double-stranded (ds) DNA in an ATP-dependent manner to modulate DNA topology and maintain chromosomes in an underwound state. Negative supercoiling favors strand separation, and DNA replication, transcription, recombination and repair, all of which involve strand separation. Also able to catalyze the interconversion of other topological isomers of dsDNA rings, including catenanes and knotted rings. Type II topoisomerases break and join 2 DNA strands simultaneously in an ATP-dependent manner. This chain is DNA gyrase subunit B, found in Mycobacterium tuberculosis (strain ATCC 25177 / H37Ra).